Consider the following 162-residue polypeptide: Scytalone dehydratase-like protein claB (162 aa).

Residue Y48 coordinates substrate. Active-site residues include H83 and H108.

This sequence belongs to the scytalone dehydratase family.

It participates in pigment biosynthesis. In terms of biological role, scytalone dehydratase-like protein; part of the gene cluster that mediates the biosynthesis of the bianthraquinone cladofulvin, a conidial pigment not required for virulence but that plays a role in fitness and resistance to environmental stresses including UV light and low-temperature stress. The pathway begins with the synthesis of atrochrysone thioester by the polyketide synthase (PKS) claG. The atrochrysone carboxyl ACP thioesterase claF then breaks the thioester bond and releases the atrochrysone carboxylic acid from claG. This compound is decarboxylated by claH to yield emodin, which is further converted to chrysophanol hydroquinone by the reductase claC and the dehydratase claB. The cytochrome P450 monooxygenase claM then catalyzes the dimerization of nataloe-emodin to cladofulvin. The sequence is that of Scytalone dehydratase-like protein claB from Passalora fulva (Tomato leaf mold).